The following is a 253-amino-acid chain: 5-oxoprolinase subunit A (253 aa).

Belongs to the LamB/PxpA family. As to quaternary structure, forms a complex composed of PxpA, PxpB and PxpC.

It carries out the reaction 5-oxo-L-proline + ATP + 2 H2O = L-glutamate + ADP + phosphate + H(+). Catalyzes the cleavage of 5-oxoproline to form L-glutamate coupled to the hydrolysis of ATP to ADP and inorganic phosphate. The polypeptide is 5-oxoprolinase subunit A (Syntrophobacter fumaroxidans (strain DSM 10017 / MPOB)).